Consider the following 404-residue polypeptide: Probable RNA polymerase sigma-C factor (404 aa).

A Polymerase core binding motif is present at residues 193-206 (DLIQEGTLGLERAV). Positions 362-381 (LSEIGRILNLSRERVRQIEA) form a DNA-binding region, H-T-H motif.

The protein belongs to the sigma-70 factor family.

Its function is as follows. Sigma factors are initiation factors that promote the attachment of RNA polymerase to specific initiation sites and are then released. The chain is Probable RNA polymerase sigma-C factor (sigC) from Synechocystis sp. (strain ATCC 27184 / PCC 6803 / Kazusa).